The sequence spans 403 residues: Subtilisin-like protease CPC735_035780 (403 aa).

The N-terminal stretch at M1–A19 is a signal peptide. A propeptide spanning residues A20 to T117 is cleaved from the precursor. Residues S35–L116 enclose the Inhibitor I9 domain. A Peptidase S8 domain is found at S127–R403. Residues D159 and H190 each act as charge relay system in the active site. N-linked (GlcNAc...) asparagine glycosylation is found at N233 and N251. Residue S349 is the Charge relay system of the active site. The N-linked (GlcNAc...) asparagine glycan is linked to N399.

Belongs to the peptidase S8 family.

The protein localises to the secreted. Secreted subtilisin-like serine protease with keratinolytic activity that contributes to pathogenicity. This chain is Subtilisin-like protease CPC735_035780, found in Coccidioides posadasii (strain C735) (Valley fever fungus).